The primary structure comprises 141 residues: Large ribosomal subunit protein uL11 (141 aa).

The protein belongs to the universal ribosomal protein uL11 family. Part of the ribosomal stalk of the 50S ribosomal subunit. Interacts with L10 and the large rRNA to form the base of the stalk. L10 forms an elongated spine to which L12 dimers bind in a sequential fashion forming a multimeric L10(L12)X complex. Post-translationally, one or more lysine residues are methylated.

Forms part of the ribosomal stalk which helps the ribosome interact with GTP-bound translation factors. This is Large ribosomal subunit protein uL11 from Lactococcus lactis subsp. lactis (strain IL1403) (Streptococcus lactis).